A 298-amino-acid chain; its full sequence is Probable endonuclease 4 (298 aa).

Zn(2+)-binding residues include His-69, His-110, Glu-145, Asp-179, His-182, His-214, Asp-227, His-229, and Glu-259.

Belongs to the AP endonuclease 2 family. The cofactor is Zn(2+).

The enzyme catalyses Endonucleolytic cleavage to 5'-phosphooligonucleotide end-products.. Endonuclease IV plays a role in DNA repair. It cleaves phosphodiester bonds at apurinic or apyrimidinic (AP) sites, generating a 3'-hydroxyl group and a 5'-terminal sugar phosphate. This chain is Probable endonuclease 4, found in Geobacillus sp. (strain WCH70).